The sequence spans 639 residues: Far upstream element-binding protein 1 (639 aa).

Disordered stretches follow at residues 1–27 (MADY…NDAF) and 40–88 (KIGG…LPPM). Ala2 is modified (N-acetylalanine). Gly residues predominate over residues 14 to 23 (SAGGGGGGGV). 2 positions are modified to phosphoserine: Ser48 and Ser51. A compositionally biased stretch (basic and acidic residues) spans 61–73 (RPLEDGDQPDAKK). 3 consecutive KH domains span residues 95–159 (VMTE…KRLL), 180–246 (NAVQ…KEMV), and 270–334 (NEGI…AEII). A Phosphoserine modification is found at Ser135. The residue at position 148 (Thr148) is a Phosphothreonine. Omega-N-methylarginine is present on residues Arg316, Arg354, Arg356, and Arg358. The tract at residues 341–360 (VQAGNPGGPGPGGRGRGRGQ) is disordered. Residues 345–360 (NPGGPGPGGRGRGRGQ) show a composition bias toward gly residues. Residues 371–438 (LQEFNFIVPT…QQIDYARQLI (68 aa)) form the KH 4 domain. A Phosphothreonine modification is found at Thr427. Disordered stretches follow at residues 442–527 (IGGP…GTDP) and 543–574 (QAQP…PAGQ). Positions 463–500 (PHGPPGPPGPGTPMGPYNPAPYNPGPPGPAPHGPPAPY) are enriched in pro residues. The segment covering 551–568 (PAGAPTTTQTNGQGDQQN) has biased composition (low complexity). Phosphoserine is present on Ser625.

As to quaternary structure, found in a complex with PUF60 and far upstream element (FUSE) DNA segment. Interacts with PUF60 and JTV1. Ubiquitinated. This targets the protein for proteasome-mediated degradation.

It is found in the nucleus. Its function is as follows. Regulates MYC expression by binding to a single-stranded far-upstream element (FUSE) upstream of the MYC promoter. May act both as activator and repressor of transcription. This is Far upstream element-binding protein 1 from Rattus norvegicus (Rat).